We begin with the raw amino-acid sequence, 295 residues long: Oxidoreductase AN1597 (295 aa).

The protein belongs to the asaB hydroxylase/desaturase family.

It participates in secondary metabolite biosynthesis; terpenoid biosynthesis. Functionally, oxidoreductase; part of the gene cluster that mediates the biosynthesis of the diterpene ent-pimara-8(14),15-diene (PD). Within the cluster, the HMG-CoA reductase AN1593 functions in the mevalonate pathway, which produces isoprenoid precursors. The geranylgeranyl pyrophosphate (GGPP) synthase AN1592 is needed in the formation of GGPP, the precursor for diterpenes. Lastly, the pimaradiene synthase pbcA performs the 2 cyclization steps that convert GGPP to ent-pimara-8(14),15-diene. The putative roles of the remaining cluster enzymes in ent-pimara-8(14),15-diene biosynthesis is unclear. The cytochrome P450 monooxygenase AN1598, the glutathione S-transferase AN1595, the oxidoreductases AN1596 and AN1597 probably function as decorative enzymes. It is possible that in biological conditions the compound is oxidized to ent-pimara-8(14),15-dien-19-oic acid, which is a bioactive diterpene compound predominant in many plant extracts. This Emericella nidulans (strain FGSC A4 / ATCC 38163 / CBS 112.46 / NRRL 194 / M139) (Aspergillus nidulans) protein is Oxidoreductase AN1597.